Reading from the N-terminus, the 465-residue chain is Branched-chain amino acid permease BcaP (465 aa).

13 consecutive transmembrane segments (helical) span residues 35–55 (LLGI…TGAV), 57–77 (AGPG…FAAL), 103–123 (LMAF…VSAV), 133–153 (SFLS…PGAV), 159–179 (LFNL…YLGI), 188–208 (IMVI…AVYV), 216–236 (FMPM…FAFI), 258–278 (GIIF…AIMT), 305–325 (VAGI…LVML), 355–375 (PYVA…LVPL), 380–400 (KLVN…VIVL), 413–432 (CPGV…FLIL), and 437–456 (VTIV…YFLY).

The protein belongs to the amino acid-polyamine-organocation (APC) superfamily.

The protein resides in the cell membrane. Isoleucine uptake is efficiently reduced in the presence of 100-fold excess valine, leucine, alanine, threonine, serine, cysteine, asparagine, and a nonproteinaceous amino acid 4-azaleucine. Functionally, branched-chain amino acid transport system which is involved in the uptake of isoleucine, valine and probably leucine. Can also transport threonine, and is active as a minor serine permease. May be an amino acid permease of rather broad specificity, because several amino acids, albeit at 100-fold excess, are able to prevent isoleucine uptake. Probably does not transport methionine. Together with BraB and BrnQ, plays an important role in the activation of CodY, a branched-chain amino acid-responsive transcriptional regulator that controls the expression of several dozen transcription units in B.subtilis. This Bacillus subtilis (strain 168) protein is Branched-chain amino acid permease BcaP.